We begin with the raw amino-acid sequence, 142 residues long: Type IV pilus subunit protein TapA (142 aa).

Residues methionine 1 to glycine 6 constitute a propeptide, leader sequence. An N-methylphenylalanine modification is found at phenylalanine 7. A helical membrane pass occupies residues phenylalanine 7–leucine 27.

It belongs to the N-Me-Phe pilin family.

It is found in the membrane. Its function is as follows. Major component of the type IV (TAP) pilus. Aeromonas hydrophila possesses two distinct families of type IV pili: the bundle-forming pilus (Bfp) and the type IV pilus (Tap). The chain is Type IV pilus subunit protein TapA (tapA) from Aeromonas hydrophila.